The sequence spans 188 residues: Elongation factor P (188 aa).

Belongs to the elongation factor P family.

The protein localises to the cytoplasm. The protein operates within protein biosynthesis; polypeptide chain elongation. In terms of biological role, involved in peptide bond synthesis. Stimulates efficient translation and peptide-bond synthesis on native or reconstituted 70S ribosomes in vitro. Probably functions indirectly by altering the affinity of the ribosome for aminoacyl-tRNA, thus increasing their reactivity as acceptors for peptidyl transferase. The protein is Elongation factor P of Rhodopseudomonas palustris (strain BisB5).